The sequence spans 164 residues: Transcriptional repressor NrdR (164 aa).

Residues 3–34 (CPFCRHDDTQVVDSRVSEDGAAIRRRRRCPAC) fold into a zinc finger. In terms of domain architecture, ATP-cone spans 49–139 (PSVVKKDGSR…VYRRFEDVSE (91 aa)).

This sequence belongs to the NrdR family. The cofactor is Zn(2+).

In terms of biological role, negatively regulates transcription of bacterial ribonucleotide reductase nrd genes and operons by binding to NrdR-boxes. The protein is Transcriptional repressor NrdR of Paraburkholderia phymatum (strain DSM 17167 / CIP 108236 / LMG 21445 / STM815) (Burkholderia phymatum).